We begin with the raw amino-acid sequence, 96 residues long: Large ribosomal subunit protein uL23 (96 aa).

It belongs to the universal ribosomal protein uL23 family. Part of the 50S ribosomal subunit. Contacts protein L29, and trigger factor when it is bound to the ribosome.

Its function is as follows. One of the early assembly proteins it binds 23S rRNA. One of the proteins that surrounds the polypeptide exit tunnel on the outside of the ribosome. Forms the main docking site for trigger factor binding to the ribosome. The sequence is that of Large ribosomal subunit protein uL23 from Caldanaerobacter subterraneus subsp. tengcongensis (strain DSM 15242 / JCM 11007 / NBRC 100824 / MB4) (Thermoanaerobacter tengcongensis).